Reading from the N-terminus, the 211-residue chain is Ribosomal RNA small subunit methyltransferase G (211 aa).

Residues G74, L79, 125–126 (AE), and R140 each bind S-adenosyl-L-methionine.

It belongs to the methyltransferase superfamily. RNA methyltransferase RsmG family.

It localises to the cytoplasm. Specifically methylates the N7 position of guanine in position 518 of 16S rRNA. The sequence is that of Ribosomal RNA small subunit methyltransferase G from Clavibacter michiganensis subsp. michiganensis (strain NCPPB 382).